An 881-amino-acid chain; its full sequence is Actin-like protein ARP8 (881 aa).

The tract at residues 1–150 is disordered; the sequence is MSQEEAESSI…DPAKAPPGKK (150 aa). Acidic residues-rich tracts occupy residues 14–33 and 44–54; these read EPID…EEEN and ENAENESDDSV. S65 and S70 each carry phosphoserine. The segment covering 77-114 has biased composition (acidic residues); the sequence is ADEEDEDEEGEDEDEDEDDNDVDNEDENDNDNANENEN. 502–505 serves as a coordination point for ATP; sequence NIGA.

Belongs to the actin family. Component of the chromatin-remodeling INO80 complex, at least composed of ARP4, ARP5, ARP8, RVB1, RVB2, TAF14, NHP10, IES1, IES3, IES4, IES6, ACT1, IES2, IES5 and INO80. Exists as monomers and dimers, but the dimer is most probably the biologically relevant form required for stable interactions with histones that exploits the twofold symmetry of the nucleosome core.

The protein resides in the nucleus. It localises to the cytoplasm. It is found in the cytoskeleton. Its function is as follows. Probably involved in transcription regulation via its interaction with the INO80 complex, a chromatin remodeling complex. Exhibits low basal ATPase activity, and unable to polymerize. Strongly prefer nucleosomes and H3-H4 tetramers over H2A-H2B dimers, suggesting it may act as a nucleosome recognition module within the complex. The polypeptide is Actin-like protein ARP8 (ARP8) (Saccharomyces cerevisiae (strain ATCC 204508 / S288c) (Baker's yeast)).